We begin with the raw amino-acid sequence, 302 residues long: Spermidine synthase (302 aa).

The residue at position 1 (M1) is an N-acetylmethionine. The region spanning 18–253 (EGWFRETCSL…GQIGFMLCSK (236 aa)) is the PABS domain. Q49 is a binding site for S-adenosyl 3-(methylsulfanyl)propylamine. Position 79 (Y79) interacts with putrescine. Residues Q80, D104, E124, 155–156 (DG), and D173 contribute to the S-adenosyl 3-(methylsulfanyl)propylamine site. D173 functions as the Proton acceptor in the catalytic mechanism. Putrescine contacts are provided by residues 173–176 (DSSD) and Y241.

Belongs to the spermidine/spermine synthase family. As to quaternary structure, homodimer or homotetramer.

It carries out the reaction S-adenosyl 3-(methylsulfanyl)propylamine + putrescine = S-methyl-5'-thioadenosine + spermidine + H(+). It functions in the pathway amine and polyamine biosynthesis; spermidine biosynthesis; spermidine from putrescine: step 1/1. Its activity is regulated as follows. The activity is thought to be regulated mainly by the availability of decarboxylated S-adenosylmethionine. Its function is as follows. Catalyzes the production of spermidine from putrescine and decarboxylated S-adenosylmethionine (dcSAM). Has a strong preference for putrescine as substrate, and has very low activity towards 1,3-diaminopropane. Has extremely low activity towards spermidine. The protein is Spermidine synthase (Srm) of Mus musculus (Mouse).